The following is a 1103-amino-acid chain: Voltage-dependent calcium channel subunit alpha-2/delta-1 (1103 aa).

Positions Met1–Glu24 are cleaved as a signal peptide. Residues Glu25–Gly1073 lie on the Extracellular side of the membrane. N-linked (GlcNAc...) asparagine glycosylation is present at Asn92. At Ser119 the chain carries Phosphoserine. Asn136 and Asn184 each carry an N-linked (GlcNAc...) asparagine glycan. The region spanning Asp253 to Leu430 is the VWFA domain. The a divalent metal cation site is built by Asp259, Ser261, and Ser263. Residues Asp259–Ser263 carry the MIDAS-like motif motif. Asn324 and Asn348 each carry an N-linked (GlcNAc...) asparagine glycan. An intrachain disulfide couples Cys404 to Cys1059. Positions Trp446 to Pro537 constitute a Cache domain. Residues Asn613, Asn781, and Asn888 are each glycosylated (N-linked (GlcNAc...) asparagine). The chain crosses the membrane as a helical span at residues Val1074–Leu1094. Topologically, residues Val1095 to Leu1103 are cytoplasmic.

This sequence belongs to the calcium channel subunit alpha-2/delta family. Dimer formed of alpha-2-1 and delta-1 chains; disulfide-linked. Voltage-dependent calcium channels are multisubunit complexes, consisting of alpha-1 (CACNA1), alpha-2 (CACNA2D), beta (CACNB) and delta (CACNA2D) subunits in a 1:1:1:1 ratio. In terms of processing, proteolytically processed into subunits alpha-2-1 and delta-1 that are disulfide-linked. As to expression, isoform 2A is expressed in skeletal muscle and aorta. Isoform 2B is expressed in brain. Isoform 2C is expressed in heart. Isoform 2D is expressed in heart and smooth muscle. Isoform 2E is expressed in smooth muscle. All five isoforms are expressed in the cardiovascular system.

The protein localises to the membrane. The protein resides in the cell membrane. Functionally, the alpha-2/delta subunit of voltage-dependent calcium channels regulates calcium current density and activation/inactivation kinetics of the calcium channel. Plays an important role in excitation-contraction coupling. This is Voltage-dependent calcium channel subunit alpha-2/delta-1 (Cacna2d1) from Mus musculus (Mouse).